The primary structure comprises 359 residues: MLAPRLAFVLLLSSYFGSILITSVESSDEVDMEKKTVKMRGSNTSVLVEGDGGKISTLYFEEDDDDDDDEDNEESENEVEDFDDENALSFQVESLQEVDESGKPVKASKSSEIQHSVSSVGSLAFTVSALQNSTTYQNLSAKTVTLQAQLPNMATLELMVVLFLEDGTIKFGNETFKVLSGTMKFNINVTGWQYCDGATVSCLSDSNQPAAVGDNLDLALTVKSEAEDPEEVDDAKRAETGKDPICVDPDDPNEEDDDCPVVYDMGGNSEMVLNKGVLVNNMDYVAMPQGFPNLEKTGMMQKKLTFRLPKTPGSVIIDPSVNIGVPPKKQSGNSGTSIKASSLCFFTLTLLLSVLIAHF.

An N-terminal signal peptide occupies residues 1–26 (MLAPRLAFVLLLSSYFGSILITSVES). 2 disordered regions span residues 60-83 (FEEDDDDDDDEDNEESENEVEDFD) and 224-254 (SEAEDPEEVDDAKRAETGKDPICVDPDDPNE). The stretch at 66 to 89 (DDDDEDNEESENEVEDFDDENALS) forms a coiled coil.

Component of the acid-insoluble and acid-soluble organic matrix of the aragonitic skeleton (at protein level).

The protein resides in the secreted. The sequence is that of Acidic skeletal organic matrix protein from Acropora millepora (Staghorn coral).